The sequence spans 298 residues: Putative glycylpeptide N-tetradecanoyltransferase (298 aa).

The protein belongs to the NMT family.

The enzyme catalyses N-terminal glycyl-[protein] + tetradecanoyl-CoA = N-tetradecanoylglycyl-[protein] + CoA + H(+). Its function is as follows. Adds a myristoyl group to the N-terminal glycine residue of certain proteins. The sequence is that of Putative glycylpeptide N-tetradecanoyltransferase from Melanoplus sanguinipes (Migratory grasshopper).